The following is a 334-amino-acid chain: NAD-dependent protein deacetylase sirtuin-3 (334 aa).

One can recognise a Deacetylase sirtuin-type domain in the interval 53–315 (SSEKKFSLQD…ERLVDLLGWT (263 aa)). The residue at position 57 (lysine 57) is an N6-succinyllysine. NAD(+) contacts are provided by residues 80-100 (GAGI…SGLY) and 163-166 (QNID). Catalysis depends on histidine 183, which acts as the Proton acceptor. Residues cysteine 191, cysteine 194, cysteine 215, and cysteine 218 each coordinate Zn(2+). NAD(+)-binding positions include 254-256 (GTS) and 279-281 (NRD).

Belongs to the sirtuin family. Class I subfamily. Upon metabolic stress, forms a complex composed of FOXO3, SIRT3 and mitochondrial RNA polymerase POLRMT; the complex is recruited to mtDNA in a SIRT3-dependent manner. Also forms a complex composed of FOXO3, SIRT3, TFAM and POLRMT. Interacts with NDUFA9, ACSS1, IDH2 and GDH. Interacts with PCCA. Requires Zn(2+) as cofactor. In terms of tissue distribution, expressed in cardiomyocytes (at protein level). Expressed in the brain, liver, kidney and testes. Expressed in skeletal muscles (at protein level).

It localises to the mitochondrion matrix. Its subcellular location is the cytoplasm. It catalyses the reaction N(6)-acetyl-L-lysyl-[protein] + NAD(+) + H2O = 2''-O-acetyl-ADP-D-ribose + nicotinamide + L-lysyl-[protein]. It carries out the reaction N(6)-[(S)-lactoyl]-L-lysyl-[protein] + NAD(+) + H2O = 2''-O-(S)-lactoyl-ADP-D-ribose + nicotinamide + L-lysyl-[protein]. In terms of biological role, NAD-dependent protein deacetylase. Activates or deactivates mitochondrial target proteins by deacetylating key lysine residues. Known targets include ACSS1, IDH, GDH, PDHA1, SOD2, LCAD, SDHA, MRPL12 and the ATP synthase subunit ATP5PO. Contributes to the regulation of the cellular energy metabolism. Important for regulating tissue-specific ATP levels. In response to metabolic stress, deacetylates transcription factor FOXO3 and recruits FOXO3 and mitochondrial RNA polymerase POLRMT to mtDNA to promote mtDNA transcription. Acts as a regulator of ceramide metabolism by mediating deacetylation of ceramide synthases CERS1, CERS2 and CERS6, thereby increasing their activity and promoting mitochondrial ceramide accumulation. Regulates hepatic lipogenesis. Uses NAD(+) substrate imported by SLC25A47, triggering downstream activation of PRKAA1/AMPK-alpha signaling cascade that ultimately downregulates sterol regulatory element-binding protein (SREBP) transcriptional activities and ATP-consuming lipogenesis to restore cellular energy balance. In addition to protein deacetylase activity, also acts as a protein-lysine deacylase by mediating delactylation of proteins, such as CCNE2 and 'Lys-16' of histone H4 (H4K16la). This Mus musculus (Mouse) protein is NAD-dependent protein deacetylase sirtuin-3.